The primary structure comprises 363 residues: Lipase (363 aa).

A signal peptide spans 1–24; that stretch reads MVLKQRANYLGFLIVFFTAFLVEA. The propeptide occupies 25–94; that stretch reads VPIKRQSNST…SYPDSVVQAM (70 aa). The interval 33–69 is disordered; it reads STVDSLPPLIPSRTSAPSSSPSTTDPEAPAMSRNGPL. Over residues 43-62 the composition is skewed to low complexity; sequence PSRTSAPSSSPSTTDPEAPA. Disulfide bonds link cysteine 123–cysteine 362, cysteine 134–cysteine 137, and cysteine 329–cysteine 338. Catalysis depends on serine 238, which acts as the Nucleophile. Aspartate 297 functions as the Charge relay system in the catalytic mechanism. Ca(2+) is bound at residue aspartate 350. The active-site Charge relay system is the histidine 351.

It belongs to the AB hydrolase superfamily. Lipase family.

It carries out the reaction a triacylglycerol + H2O = a diacylglycerol + a fatty acid + H(+). In Rhizomucor miehei, this protein is Lipase.